The following is a 162-amino-acid chain: MKSLQKGFTLIELMIVVAIIGILAAFAIPAYNDYIARTQVSEGVSLADGLKIRIADNLQDGKCTSEGDPASGEVGNTDMGKYALATIEGTPDANLAGLTPKDPNGCKVKIEYGKGTAGDNISPLIKGQMLVLNQLVNGSYDKDSSSTVKPKFLPKALKEATP.

Residues 1–7 (MKSLQKG) constitute a propeptide, leader sequence. Phe8 carries the post-translational modification N-methylphenylalanine. The helical transmembrane segment at 8–28 (FTLIELMIVVAIIGILAAFAI) threads the bilayer. A disulfide bond links Cys63 and Cys106.

The protein belongs to the N-Me-Phe pilin family.

The protein resides in the fimbrium. It is found in the membrane. Major component of the type IV fimbriae that plays an essential role in twitching motility, natural transformation, and protease secretion. The chain is Type IV major fimbrial protein FimA (fimA) from Dichelobacter nodosus (strain VCS1703A).